We begin with the raw amino-acid sequence, 1682 residues long: PHD and RING finger domain-containing protein 1 (1682 aa).

A disordered region spans residues 1–81; it reads MDDDNLDELV…SGSEDSEDGV (81 aa). A compositionally biased stretch (acidic residues) spans 41–81; that stretch reads DSEDDTGSEQDDDTDGEETEGLSEEEDPEDRSGSEDSEDGV. Residues 109–150 form an RING-type; degenerate zinc finger; the sequence is CPICLNAFRDQAVGTPETCAHYFCLDCIIEWSRNANSCPVDR. The PHD-type zinc-finger motif lies at 185-235; the sequence is PTFCEVCGRSDREDRLLLCDGCDAGYHMECLDPPLQEVPVDEWFCPECTVP. 5 disordered regions span residues 330-412, 444-483, 532-582, 605-774, and 825-856; these read PLTP…SMPS, PFDSNEEQSADPPSPLSAKRRVLSRSALQSHQPVARPVAM, SLSA…RQPN, VRSD…GSSF, and LKSEIYDPFDPTGSDSSPPSSSPESLGPGLLP. Thr-332 bears the Phosphothreonine mark. Basic residues-rich tracts occupy residues 336–361 and 369–384; these read PAKRKRKAGRRKKVLGRKKTRSRSSV and RAKKRQHRVRKTKGRK. Phosphoserine occurs at positions 447 and 457. Composition is skewed to polar residues over residues 609 to 620, 630 to 667, and 734 to 748; these read PSLTPRSGLSRT, THSSSPQLNGSNVRVSSASTKIVTHSSFPSKNTASGLP, and SSRGPQETGSHTSGS. Residues 832 to 856 show a composition bias toward low complexity; that stretch reads PFDPTGSDSSPPSSSPESLGPGLLP. 7 positions are modified to phosphoserine: Ser-845, Ser-846, Ser-864, Ser-867, Ser-919, Ser-982, and Ser-1000. Disordered regions lie at residues 911–1225 and 1288–1322; these read SKGS…VSEV and DDMSSPPSPESTDSSPERDFPPNPILPPASLPQDS. Residues 919–931 are compositionally biased toward acidic residues; the sequence is SDLEQEGLGEIEP. Over residues 999 to 1008 the composition is skewed to low complexity; that stretch reads SSRSRSTSSS. Basic residues-rich tracts occupy residues 1009-1030 and 1053-1063; these read RSRKKTKKKKKKVAREHQRTRS and RRHRAKTKSRR. Residues 1064–1090 are compositionally biased toward basic and acidic residues; the sequence is SSSDRASSQDRAKRRKDRDDRDREHRR. Composition is skewed to basic residues over residues 1091–1104 and 1119–1129; these read GSWGHGRCRRKSRS and SKRRKRRHSGS. Position 1135 is a phosphoserine (Ser-1135). Composition is skewed to basic and acidic residues over residues 1147-1161 and 1182-1197; these read RSRERMDKQESVTRS and PSREKRAHSPEKKGPV. Ser-1201 carries the phosphoserine modification. Residues 1288-1301 show a composition bias toward low complexity; sequence DDMSSPPSPESTDS. A compositionally biased stretch (pro residues) spans 1308 to 1317; the sequence is PPNPILPPAS. 2 positions are modified to phosphoserine: Ser-1368 and Ser-1379. A Phosphothreonine modification is found at Thr-1412. Disordered stretches follow at residues 1419–1445, 1463–1496, 1567–1588, and 1663–1682; these read EHSTPAALDRDPRTPLQRPQRPQEGDW, LPPPIHVLQESGLPDADPSQPPGAPRAEGLPAAG, AVPTTNNSEERTATPKTAAEKT, and MRRHKKTEGGEEPPTQGAET. Over residues 1574–1588 the composition is skewed to basic and acidic residues; the sequence is SEERTATPKTAAEKT. Positions 1585-1612 form a coiled coil; it reads AEKTKKEEYMKKLHMQERAVEEVKLAIK.

Interacts with POLR2A (via the C-terminal domain).

This is PHD and RING finger domain-containing protein 1 from Mus musculus (Mouse).